A 509-amino-acid chain; its full sequence is Phosphoprotein (509 aa).

Disordered stretches follow at residues 33 to 84, 131 to 236, and 256 to 281; these read LESW…LGFR, VQAN…DGNS, and PESRWESSERNASVGSVPKSARSAKT. The segment covering 44-65 has biased composition (polar residues); that stretch reads GRATPNPDTSEGDHQNINQSCS. Over residues 146-157 the composition is skewed to acidic residues; sequence DGSDDSDVDSGP. A Phosphoserine modification is found at Ser151. Over residues 178–187 the composition is skewed to basic and acidic residues; that stretch reads RSTDVEKLEG. Residues 221-236 show a composition bias toward polar residues; the sequence is SRPSAQSIKKGTDGNS. Residues 303 to 376 are multimerization; the sequence is SEFEYEDDLF…LSSIMIAIPG (74 aa). The segment at 459–509 is interaction with the nucleocapsid (N-RNA); sequence SSRSVIRSIIKSSKLNIDHKDYLLDLLNDVKGSKDLKEFHKMLTAILAKQP.

The protein belongs to the morbillivirus P protein family. Homotetramer. Interacts (via multimerization domain) with polymerase L; this interaction forms the polymerase L-P complex. Interacts (via N-terminus) with N0 (via Ncore); this interaction allows P to chaperon N0 to avoid N polymerization before encapsidation. Interacts (via C-terminus) with N-RNA template; this interaction positions the polymerase on the template for both transcription and replication. Interacts with host ISG15; this interaction disrupts the activity of the N0-P complex. Phosphorylation on serines by host CK2 is necessary for the formation of viral factories.

Its function is as follows. Essential cofactor of the RNA polymerase L that plays a central role in the transcription and replication by forming the polymerase complex with RNA polymerase L and recruiting L to the genomic N-RNA template for RNA synthesis. Also plays a central role in the encapsidation of nascent RNA chains by forming the encapsidation complex with the nucleocapsid protein N (N-P complex). Acts as a chaperone for newly synthesized free N protein, so-called N0, allowing encapsidation of nascent RNA chains during replication. The nucleoprotein protein N prevents excessive phosphorylation of P, which leads to down-regulation of viral transcription/ replication. Participates, together with N, in the formation of viral factories (viroplasms), which are large inclusions in the host cytoplasm where replication takes place. This is Phosphoprotein (P/V) from Capra hircus (Goat).